The primary structure comprises 322 residues: Ferrochelatase (322 aa).

2 residues coordinate Fe cation: H193 and E274.

It belongs to the ferrochelatase family.

The protein resides in the cytoplasm. The enzyme catalyses heme b + 2 H(+) = protoporphyrin IX + Fe(2+). Its pathway is porphyrin-containing compound metabolism; protoheme biosynthesis; protoheme from protoporphyrin-IX: step 1/1. Its function is as follows. Catalyzes the ferrous insertion into protoporphyrin IX. The chain is Ferrochelatase from Photobacterium profundum (strain SS9).